Here is a 580-residue protein sequence, read N- to C-terminus: Membrane protein insertase YidC (580 aa).

Transmembrane regions (helical) follow at residues Ser-5–Pro-25, Lys-259–Ser-279, Gly-362–Ala-382, Leu-427–Phe-447, Ile-477–Val-497, and Ile-513–Leu-533.

This sequence belongs to the OXA1/ALB3/YidC family. Type 1 subfamily. As to quaternary structure, interacts with the Sec translocase complex via SecD. Specifically interacts with transmembrane segments of nascent integral membrane proteins during membrane integration.

The protein localises to the cell inner membrane. In terms of biological role, required for the insertion and/or proper folding and/or complex formation of integral membrane proteins into the membrane. Involved in integration of membrane proteins that insert both dependently and independently of the Sec translocase complex, as well as at least some lipoproteins. Aids folding of multispanning membrane proteins. This Chlorobium phaeovibrioides (strain DSM 265 / 1930) (Prosthecochloris vibrioformis (strain DSM 265)) protein is Membrane protein insertase YidC.